We begin with the raw amino-acid sequence, 469 residues long: Putative multidrug resistance protein MdtD (469 aa).

13 helical membrane passes run 8–28 (LWIV…VNTA), 45–65 (SVIV…GWLA), 68–88 (VGVK…SLLC), 102–122 (VIQG…VMKI), 134–154 (FVTL…GFLV), 161–181 (WIFL…LWLM), 191–211 (FDIS…LALD), 215–235 (GLGL…LALA), 263–283 (LIGS…TPVF), 286–306 (IGLG…IIGS), 338–358 (LSFP…VLFF), 392–412 (MVMQ…LGVF), and 426–446 (SAFL…ALIF).

Belongs to the major facilitator superfamily. TCR/Tet family.

The protein localises to the cell inner membrane. This Yersinia enterocolitica serotype O:8 / biotype 1B (strain NCTC 13174 / 8081) protein is Putative multidrug resistance protein MdtD.